A 440-amino-acid polypeptide reads, in one-letter code: Thymidine phosphorylase (440 aa).

Belongs to the thymidine/pyrimidine-nucleoside phosphorylase family. As to quaternary structure, homodimer.

It catalyses the reaction thymidine + phosphate = 2-deoxy-alpha-D-ribose 1-phosphate + thymine. It participates in pyrimidine metabolism; dTMP biosynthesis via salvage pathway; dTMP from thymine: step 1/2. The enzymes which catalyze the reversible phosphorolysis of pyrimidine nucleosides are involved in the degradation of these compounds and in their utilization as carbon and energy sources, or in the rescue of pyrimidine bases for nucleotide synthesis. This chain is Thymidine phosphorylase, found in Cronobacter sakazakii (strain ATCC BAA-894) (Enterobacter sakazakii).